Consider the following 180-residue polypeptide: Insulin-like growth factor 2 (180 aa).

Positions 1–24 (MGIPVGKSMLVLLISLAFALCCIA) are cleaved as a signal peptide. A b region spans residues 25–52 (AYRPSETLCGGELVDTLQFVCSDRGFYF). Intrachain disulfides connect C33/C71, C45/C84, and C70/C75. The c stretch occupies residues 53–64 (SRPSSRANRRSR). The tract at residues 65 to 85 (GIVEECCFRSCDLALLETYCA) is a. Residues 86 to 91 (TPAKSE) are d. Residues 92 to 180 (RDVSTSQAVL…ASSEMSSNHQ (89 aa)) constitute a propeptide, e peptide. The interval 160–180 (VLPPKDPAHGGASSEMSSNHQ) is disordered.

Belongs to the insulin family. Interacts with MYORG; this interaction is required for IGF2 secretion. Interacts with integrins ITGAV:ITGB3 and ITGA6:ITGB4; integrin-binding is required for IGF2 signaling. Interacts with IGFBP2. In terms of processing, proteolytically processed by PCSK4, proIGF2 is cleaved at Arg-128 and Arg-92 to generate big-IGF2 and mature IGF2.

The protein resides in the secreted. In terms of biological role, the insulin-like growth factors possess growth-promoting activity. Major fetal growth hormone in mammals. Plays a key role in regulating fetoplacental development. IGF2 is influenced by placental lactogen. Also involved in tissue differentiation. In adults, involved in glucose metabolism in adipose tissue, skeletal muscle and liver. Acts as a ligand for integrin which is required for IGF2 signaling. Positively regulates myogenic transcription factor MYOD1 function by facilitating the recruitment of transcriptional coactivators, thereby controlling muscle terminal differentiation. Inhibits myoblast differentiation and modulates metabolism via increasing the mitochondrial respiration rate. Preptin undergoes glucose-mediated co-secretion with insulin, and acts as a physiological amplifier of glucose-mediated insulin secretion. Exhibits osteogenic properties by increasing osteoblast mitogenic activity through phosphoactivation of MAPK1 and MAPK3. This chain is Insulin-like growth factor 2, found in Rattus norvegicus (Rat).